A 78-amino-acid polypeptide reads, in one-letter code: Acyl carrier protein (78 aa).

Residues 2–77 (SNIEQQVKKI…LAIDYINAHN (76 aa)) form the Carrier domain. O-(pantetheine 4'-phosphoryl)serine is present on Ser37.

It belongs to the acyl carrier protein (ACP) family. Post-translationally, 4'-phosphopantetheine is transferred from CoA to a specific serine of apo-ACP by AcpS. This modification is essential for activity because fatty acids are bound in thioester linkage to the sulfhydryl of the prosthetic group.

The protein localises to the cytoplasm. The protein operates within lipid metabolism; fatty acid biosynthesis. In terms of biological role, carrier of the growing fatty acid chain in fatty acid biosynthesis. This is Acyl carrier protein from Neisseria meningitidis serogroup C / serotype 2a (strain ATCC 700532 / DSM 15464 / FAM18).